Consider the following 251-residue polypeptide: Small ribosomal subunit protein uS4c (251 aa).

S4 RNA-binding domains follow at residues 110–170 and 189–251; these read MRLD…KLVN and RTLA…QFSE.

Belongs to the universal ribosomal protein uS4 family. Part of the 30S ribosomal subunit. Contacts protein S5. The interaction surface between S4 and S5 is involved in control of translational fidelity.

The protein resides in the plastid. It is found in the chloroplast. Functionally, one of the primary rRNA binding proteins, it binds directly to 16S rRNA where it nucleates assembly of the body of the 30S subunit. With S5 and S12 plays an important role in translational accuracy. This is Small ribosomal subunit protein uS4c (rps4) from Tetradesmus obliquus (Green alga).